A 410-amino-acid chain; its full sequence is MNEYAPLRLHVPEPTGRPGCQTDFSYLRLNDAGQARKPPVDVDAADTADLSYSLVRVLDEQGDAQGPWAEDIDPQILRQGMRAMLKTRIFDSRMVVAQRQKKMSFYMQSLGEEAIGSGQALALNRTDMCFPTYRQQSILMARDVSLVEMICQLLSNERDPLKGRQLPIMYSVREAGFFTISGNLATQFVQAVGWAMASAIKGDTKIASAWIGDGATAESDFHTALTFAHVYRAPVILNVVNNQWAISTFQAIAGGESTTFAGRGVGCGIASLRVDGNDFVAVYAASRWAAERARRGLGPSLIEWVTYRAGPHSTSDDPSKYRPADDWSHFPLGDPIARLKQHLIKIGHWSEEEHQATTAEFEAAVIAAQKEAEQYGTLANGHIPSAASMFEDVYKEMPDHLRRQRQELGV.

Belongs to the BCKDHA family. In terms of assembly, heterodimer of an alpha and a beta chain. Requires thiamine diphosphate as cofactor.

The enzyme catalyses N(6)-[(R)-lipoyl]-L-lysyl-[protein] + 3-methyl-2-oxobutanoate + H(+) = N(6)-[(R)-S(8)-2-methylpropanoyldihydrolipoyl]-L-lysyl-[protein] + CO2. In terms of biological role, the branched-chain alpha-keto dehydrogenase complex catalyzes the overall conversion of alpha-keto acids to acyl-CoA and CO(2). It contains multiple copies of three enzymatic components: branched-chain alpha-keto acid decarboxylase (E1), lipoamide acyltransferase (E2) and lipoamide dehydrogenase (E3). The protein is 2-oxoisovalerate dehydrogenase subunit alpha (bkdA1) of Pseudomonas putida (Arthrobacter siderocapsulatus).